The chain runs to 240 residues: UDP-2,3-diacylglucosamine hydrolase (240 aa).

Mn(2+)-binding residues include D8, H10, D41, N79, and H114. Residue 79 to 80 participates in substrate binding; the sequence is NR. Positions 122, 160, 164, 167, and 195 each coordinate substrate. Residues H195 and H197 each contribute to the Mn(2+) site.

Belongs to the LpxH family. The cofactor is Mn(2+).

The protein resides in the cell inner membrane. It carries out the reaction UDP-2-N,3-O-bis[(3R)-3-hydroxytetradecanoyl]-alpha-D-glucosamine + H2O = 2-N,3-O-bis[(3R)-3-hydroxytetradecanoyl]-alpha-D-glucosaminyl 1-phosphate + UMP + 2 H(+). It participates in glycolipid biosynthesis; lipid IV(A) biosynthesis; lipid IV(A) from (3R)-3-hydroxytetradecanoyl-[acyl-carrier-protein] and UDP-N-acetyl-alpha-D-glucosamine: step 4/6. Hydrolyzes the pyrophosphate bond of UDP-2,3-diacylglucosamine to yield 2,3-diacylglucosamine 1-phosphate (lipid X) and UMP by catalyzing the attack of water at the alpha-P atom. Involved in the biosynthesis of lipid A, a phosphorylated glycolipid that anchors the lipopolysaccharide to the outer membrane of the cell. This is UDP-2,3-diacylglucosamine hydrolase from Pseudomonas aeruginosa (strain UCBPP-PA14).